Consider the following 452-residue polypeptide: Adenylosuccinate synthetase 2 (452 aa).

GTP is bound by residues 19–25 (GDEGKAR) and 47–49 (GHT). Aspartate 20 serves as the catalytic Proton acceptor. 2 residues coordinate Mg(2+): aspartate 20 and glycine 47. IMP-binding positions include 20 to 23 (DEGK), 45 to 48 (NAGH), threonine 131, arginine 145, glutamine 223, threonine 238, and arginine 338. Histidine 48 acts as the Proton donor in catalysis. 334–340 (TGTGRPR) is a binding site for substrate. Residues arginine 340, 366–368 (KCD), and 437–439 (GLG) each bind GTP.

The protein belongs to the adenylosuccinate synthetase family. As to quaternary structure, homodimer. Mg(2+) serves as cofactor.

The protein localises to the cytoplasm. The enzyme catalyses IMP + L-aspartate + GTP = N(6)-(1,2-dicarboxyethyl)-AMP + GDP + phosphate + 2 H(+). It functions in the pathway purine metabolism; AMP biosynthesis via de novo pathway; AMP from IMP: step 1/2. In terms of biological role, plays an important role in the de novo pathway of purine nucleotide biosynthesis. Catalyzes the first committed step in the biosynthesis of AMP from IMP. The sequence is that of Adenylosuccinate synthetase 2 from Cupriavidus pinatubonensis (strain JMP 134 / LMG 1197) (Cupriavidus necator (strain JMP 134)).